A 647-amino-acid polypeptide reads, in one-letter code: Versicolorin B synthase (647 aa).

An N-terminal signal peptide occupies residues 1–26 (MALSTILTAAAMPVAGLFAFAQQSSA). Residues 85-86 (TA) and 106-107 (EA) contribute to the FAD site. N-linked (GlcNAc...) asparagine glycosylation is present at N117. 172–175 (GAML) is an FAD binding site. N-linked (GlcNAc...) asparagine glycosylation is found at N222 and N509. FAD contacts are provided by residues A617 and 628–629 (PM).

It belongs to the GMC oxidoreductase family. In terms of assembly, homodimer. FAD is required as a cofactor.

Its subcellular location is the cytoplasm. It localises to the cytosol. It carries out the reaction (2S-3S)-versiconal hemiacetal = versicolorin B + H2O. It catalyses the reaction (S)-5'-oxoaverantin + H(+) = (1'S,5'S)-averufin + H2O. It participates in mycotoxin biosynthesis. In terms of biological role, versicolorin B synthase; part of the fragmented gene cluster that mediates the biosynthesis of dothistromin (DOTH), a polyketide toxin very similar in structure to the aflatoxin precursor, versicolorin B. The first step of the pathway is the conversion of acetate to norsolorinic acid (NOR) and requires the fatty acid synthase subunits hexA and hexB, as well as the polyketide synthase pksA. PksA combines a hexanoyl starter unit and 7 malonyl-CoA extender units to synthesize the precursor NOR. The hexanoyl starter unit is provided to the acyl-carrier protein (ACP) domain by the fungal fatty acid synthase hexA/hexB. The second step is the conversion of NOR to averantin (AVN) and requires the norsolorinic acid ketoreductase nor1, which catalyzes the dehydration of norsolorinic acid to form (1'S)-averantin. The cytochrome P450 monooxygenase avnA then catalyzes the hydroxylation of AVN to 5'hydroxyaverantin (HAVN). The next step is performed by adhA that transforms HAVN to averufin (AVF). Averufin might then be converted to hydroxyversicolorone by cypX and avfA. Hydroxyversicolorone is further converted versiconal hemiacetal acetate (VHA) by moxY. VHA is then the substrate for the versiconal hemiacetal acetate esterase est1 to yield versiconal (VAL). Versicolorin B synthase vbsA then converts VAL to versicolorin B (VERB) by closing the bisfuran ring. Then, the activity of the versicolorin B desaturase verB leads to versicolorin A (VERA). DotB, a predicted chloroperoxidase, may perform epoxidation of the A-ring of VERA. Alternatively, a cytochrome P450, such as cypX or avnA could catalyze this step. It is also possible that another, uncharacterized, cytochrome P450 enzyme is responsible for this step. Opening of the epoxide could potentially be achieved by the epoxide hydrolase epoA. However, epoA seems not to be required for DOTH biosynthesis, but other epoxide hydrolases may have the ability to complement this hydrolysis. Alternatively, opening of the epoxide ring could be achieved non-enzymatically. The next step is the deoxygenation of ring A to yield the 5,8-dihydroxyanthraquinone which is most likely catalyzed by the NADPH dehydrogenase encoded by ver1. The last stages of DOTH biosynthesis are proposed to involve hydroxylation of the bisfuran. OrdB and norB might have oxidative roles here. An alternative possibility is that cytochrome P450 monoogenases such as avnA and cypX might perform these steps in addition to previously proposed steps. In Dothistroma septosporum (Red band needle blight fungus), this protein is Versicolorin B synthase.